Reading from the N-terminus, the 337-residue chain is MSKSLRVGVVGAGAMGADHIDRINNRTSGAHISAIIEPDAARAAAAAENAPGAQAFTRIEDAIAADAVDAVLIAVPGQFHEPVLVPALEAGLPILCEKPLTPDSESSLRIVELEQKLDKPHIQVGFMRRFDPEYNNLRKLVESGEAGELLMLRGLHRNPSVGENYTQSMLITDSVVHEFDVIPWLAGSRVVSVEVKYPKTSSLAHSGLKEPILVIMELENGVLVDVEMNVNIQFGYQVATEAVFEKGLARIGQPSGMQRWRDGEFLINEHTDFTTRFATAYDRQIQSWVDAVHEGTLVAGPNAWDGYLVALSCEAGVKAFDGGVIPVDAAPRPDFYA.

Belongs to the Gfo/Idh/MocA family. As to quaternary structure, homotetramer.

The catalysed reaction is myo-inositol + NAD(+) = scyllo-inosose + NADH + H(+). Functionally, involved in the oxidation of myo-inositol (MI) to 2-keto-myo-inositol (2KMI or 2-inosose). This Corynebacterium glutamicum (strain R) protein is Inositol 2-dehydrogenase.